Reading from the N-terminus, the 355-residue chain is Green-sensitive opsin (355 aa).

At 1 to 36 (MNGTEGINFYVPMSNKTGVVRSPFEYPQYYLAEPWK) the chain is on the extracellular side. N-linked (GlcNAc...) asparagine glycans are attached at residues N2 and N15. The chain crosses the membrane as a helical span at residues 37-61 (YRLVCCYIFFLISTGLPINLLTLLV). Over 62 to 73 (TFKHKKLRQPLN) the chain is Cytoplasmic. Residues 74 to 99 (YILVNLAVADLFMACFGFTVTFYTAW) form a helical membrane-spanning segment. Topologically, residues 100 to 113 (NGYFVFGPVGCAVE) are extracellular. C110 and C187 are joined by a disulfide. A helical transmembrane segment spans residues 114-133 (GFFATLGGQVALWSLVVLAI). Residues 134–152 (ERYIVVCKPMGNFRFSATH) lie on the Cytoplasmic side of the membrane. The chain crosses the membrane as a helical span at residues 153-176 (AMMGIAFTWVMAFSCAAPPLFGWS). Over 177–202 (RYMPEGMQCSCGPDYYTHNPDYHNES) the chain is Extracellular. A helical transmembrane segment spans residues 203–230 (YVLYMFVIHFIIPVVVIFFSYGRLICKV). The Cytoplasmic portion of the chain corresponds to 231–252 (REAAAQQQESATTQKAEKEVTR). A helical transmembrane segment spans residues 253–276 (MVILMVLGFMLAWTPYAVVAFWIF). The Extracellular segment spans residues 277–284 (TNKGADFT). Residues 285–309 (ATLMAVPAFFSKSSSLYNPIIYVLM) form a helical membrane-spanning segment. K296 carries the N6-(retinylidene)lysine modification. Residues 310-355 (NKQFRNCMITTICCGKNPFGDEDVSSTVSQSKTEVSSVSSSQVSPA) lie on the Cytoplasmic side of the membrane.

The protein belongs to the G-protein coupled receptor 1 family. Opsin subfamily. Phosphorylated on some or all of the serine and threonine residues present in the C-terminal region. In terms of tissue distribution, the color pigments are found in the cone photoreceptor cells.

It is found in the membrane. Visual pigments are the light-absorbing molecules that mediate vision. They consist of an apoprotein, opsin, covalently linked to cis-retinal. The protein is Green-sensitive opsin (PRA1) of Gallus gallus (Chicken).